We begin with the raw amino-acid sequence, 61 residues long: uncharacterized protein (61 aa).

This is an uncharacterized protein from Treponema pallidum (strain Nichols).